A 163-amino-acid chain; its full sequence is Phosphopantetheine adenylyltransferase (163 aa).

Ser-9 contributes to the substrate binding site. ATP-binding positions include 9–10 (SF) and His-17. Substrate is bound by residues Lys-41, Thr-73, and Arg-87. Residues 88–90 (GLR), Glu-98, and 123–129 (YSFISSG) each bind ATP.

Belongs to the bacterial CoaD family. In terms of assembly, homohexamer. The cofactor is Mg(2+).

The protein localises to the cytoplasm. The catalysed reaction is (R)-4'-phosphopantetheine + ATP + H(+) = 3'-dephospho-CoA + diphosphate. It functions in the pathway cofactor biosynthesis; coenzyme A biosynthesis; CoA from (R)-pantothenate: step 4/5. In terms of biological role, reversibly transfers an adenylyl group from ATP to 4'-phosphopantetheine, yielding dephospho-CoA (dPCoA) and pyrophosphate. In Desulforudis audaxviator (strain MP104C), this protein is Phosphopantetheine adenylyltransferase.